The sequence spans 114 residues: Nucleoid-associated protein Amet_4780 (114 aa).

The segment at 23–42 (QKMQKDMEKTQAALEEKEVE) is disordered. Over residues 25–42 (MQKDMEKTQAALEEKEVE) the composition is skewed to basic and acidic residues.

Belongs to the YbaB/EbfC family. Homodimer.

It localises to the cytoplasm. Its subcellular location is the nucleoid. In terms of biological role, binds to DNA and alters its conformation. May be involved in regulation of gene expression, nucleoid organization and DNA protection. This is Nucleoid-associated protein Amet_4780 from Alkaliphilus metalliredigens (strain QYMF).